Consider the following 121-residue polypeptide: Dihydroneopterin aldolase (121 aa).

Residues glutamate 22, tyrosine 54, and 73 to 74 (IE) contribute to the substrate site. Lysine 100 acts as the Proton donor/acceptor in catalysis.

It belongs to the DHNA family. In terms of assembly, homooctamer. Four molecules assemble into a ring, and two rings come together to give a cylinder with a hole of at least 13 a diameter.

The enzyme catalyses 7,8-dihydroneopterin = 6-hydroxymethyl-7,8-dihydropterin + glycolaldehyde. It carries out the reaction 7,8-dihydroneopterin = 7,8-dihydromonapterin. It functions in the pathway cofactor biosynthesis; tetrahydrofolate biosynthesis; 2-amino-4-hydroxy-6-hydroxymethyl-7,8-dihydropteridine diphosphate from 7,8-dihydroneopterin triphosphate: step 3/4. Its function is as follows. Catalyzes the conversion of 7,8-dihydroneopterin to 6-hydroxymethyl-7,8-dihydropterin. Can also catalyze the epimerization of carbon 2' of dihydroneopterin to dihydromonapterin. In Staphylococcus epidermidis (strain ATCC 35984 / DSM 28319 / BCRC 17069 / CCUG 31568 / BM 3577 / RP62A), this protein is Dihydroneopterin aldolase (folB).